The following is a 148-amino-acid chain: UPF0756 membrane protein NMA2160 (148 aa).

Helical transmembrane passes span 13-35, 50-70, 80-100, and 121-141; these read LILL…LLLM, HGLN…LVSG, FLNF…WLAG, and VIGV…AGIL.

The protein belongs to the UPF0756 family.

It localises to the cell membrane. This chain is UPF0756 membrane protein NMA2160, found in Neisseria meningitidis serogroup A / serotype 4A (strain DSM 15465 / Z2491).